We begin with the raw amino-acid sequence, 906 residues long: Cadherin-2A (906 aa).

The first 28 residues, 1-28, serve as a signal peptide directing secretion; that stretch reads MCRKEPFLLPTALCILAALVLHQGPVEA. A propeptide spanning residues 29–160 is cleaved from the precursor; that stretch reads LGGSRLCKTG…KHNGLQRQKR (132 aa). Cadherin domains are found at residues 161 to 268, 269 to 383, 384 to 498, 499 to 604, and 605 to 714; these read DWVI…RPEF, LHQI…PPEF, TAMT…NPYF, TPNP…DNAP, and YVYP…TTAP. Residues 161–724 lie on the Extracellular side of the membrane; it reads DWVIPPINVP…IIGTGLGTGA (564 aa). Ca(2+) contacts are provided by glutamate 171, aspartate 227, glutamate 229, aspartate 260, methionine 261, asparagine 262, aspartate 263, and asparagine 264. N-linked (GlcNAc...) asparagine glycosylation occurs at asparagine 274. The Ca(2+) site is built by aspartate 294, aspartate 296, and asparagine 302. Asparagine 326 carries an N-linked (GlcNAc...) asparagine glycan. Aspartate 354 contacts Ca(2+). N-linked (GlcNAc...) asparagine glycosylation is found at asparagine 403, asparagine 573, asparagine 623, asparagine 652, and asparagine 693. Residues 725–746 form a helical membrane-spanning segment; that stretch reads IIAILLCIIILLTLVLMFVVWM. The Cytoplasmic segment spans residues 747–906; sequence KRRDKERQAK…LADMYGGSDD (160 aa). Disordered regions lie at residues 775–800 and 863–884; these read EEGGGEEDQDYDLSQLQQPDTVEPDT and SGSTAGSLSSLNSSSSGGEQDY. Acidic residues predominate over residues 776 to 785; sequence EGGGEEDQDY. The segment covering 863–880 has biased composition (low complexity); sequence SGSTAGSLSSLNSSSSGG.

Homodimer (via extracellular region). Can also form heterodimers with other cadherins (via extracellular region). Dimerization occurs in trans, i.e. with a cadherin chain from another cell.

Its subcellular location is the cell membrane. The protein localises to the sarcolemma. It is found in the cell junction. The protein resides in the cell surface. It localises to the desmosome. Its subcellular location is the adherens junction. Calcium-dependent cell adhesion protein; preferentially mediates homotypic cell-cell adhesion. Cadherins may thus contribute to the sorting of heterogeneous cell types, and thereby play an important role during embryonic development. Required for proper neurite branching. Required for pre- and postsynaptic organization. In Xenopus laevis (African clawed frog), this protein is Cadherin-2A (cdh2-a).